A 465-amino-acid polypeptide reads, in one-letter code: Pancreatic triacylglycerol lipase (465 aa).

The signal sequence occupies residues 1-16 (MLLLWALPLLLGAVAG). Cystine bridges form between C20–C26 and C108–C119. Catalysis depends on S170, which acts as the Nucleophile. D194 (charge relay system) is an active-site residue. E205, R208, D210, and D213 together coordinate Ca(2+). C255 and C279 are disulfide-bonded. H281 (charge relay system) is an active-site residue. Disulfide bonds link C303-C314, C317-C321, and C449-C465. A PLAT domain is found at 355 to 465 (WRYQVAVTLS…EDILLTLTPC (111 aa)).

Belongs to the AB hydrolase superfamily. Lipase family. In terms of assembly, forms a 1:1 stoichiometric complex with (pro)colipase/CLPS.

Its subcellular location is the secreted. The enzyme catalyses a triacylglycerol + H2O = a diacylglycerol + a fatty acid + H(+). The catalysed reaction is 1,2,3-tributanoylglycerol + H2O = dibutanoylglycerol + butanoate + H(+). It carries out the reaction 1,2,3-tri-(9Z-octadecenoyl)-glycerol + H2O = di-(9Z)-octadecenoylglycerol + (9Z)-octadecenoate + H(+). It catalyses the reaction all-trans-retinyl hexadecanoate + H2O = all-trans-retinol + hexadecanoate + H(+). The enzyme catalyses 1,2-di-(9Z-octadecenoyl)-glycerol + H2O = (9Z-octadecenoyl)-glycerol + (9Z)-octadecenoate + H(+). Its activity is regulated as follows. Inhibited by bile salts, is reactivated by (pro)colipase/CLPS. Functionally, plays an important role in fat metabolism. It preferentially splits the esters of long-chain fatty acids at positions 1 and 3, producing mainly 2-monoacylglycerol and free fatty acids, and shows considerably higher activity against insoluble emulsified substrates than against soluble ones. The polypeptide is Pancreatic triacylglycerol lipase (PNLIP) (Oryctolagus cuniculus (Rabbit)).